Consider the following 238-residue polypeptide: Probable transcriptional regulatory protein CTA_0499 (238 aa).

The disordered stretch occupies residues 1–21 (MAGHSKWANTKHRKERADHKK). The segment covering 9–21 (NTKHRKERADHKK) has biased composition (basic residues).

It belongs to the TACO1 family.

The protein resides in the cytoplasm. In Chlamydia trachomatis serovar A (strain ATCC VR-571B / DSM 19440 / HAR-13), this protein is Probable transcriptional regulatory protein CTA_0499.